The primary structure comprises 131 residues: uncharacterized protein (131 aa).

2 helical membrane-spanning segments follow: residues Val5–Val25 and Met34–Asn54. Residues Ala62 to Phe131 form a disordered region. Composition is skewed to basic residues over residues Lys66–His92 and Lys122–Phe131.

It localises to the cell membrane. This is an uncharacterized protein from Bacillus subtilis (strain 168).